A 36-amino-acid polypeptide reads, in one-letter code: MAASFLPAILVPIVGLVFPALSMALFFIYASIDDIS.

The chain crosses the membrane as a helical span at residues 8 to 28; that stretch reads AILVPIVGLVFPALSMALFFI.

It belongs to the PsaI family.

The protein localises to the plastid. It is found in the chloroplast thylakoid membrane. Its function is as follows. May help in the organization of the PsaL subunit. The polypeptide is Photosystem I reaction center subunit VIII (Phaeodactylum tricornutum (strain CCAP 1055/1)).